The following is a 240-amino-acid chain: Sugar fermentation stimulation protein homolog (240 aa).

Belongs to the SfsA family.

This chain is Sugar fermentation stimulation protein homolog, found in Saccharolobus solfataricus (strain ATCC 35092 / DSM 1617 / JCM 11322 / P2) (Sulfolobus solfataricus).